Consider the following 1039-residue polypeptide: RNA-binding protein Unr (1039 aa).

A compositionally biased stretch (polar residues) spans 49 to 62 (TTLGLQPQGQGPSP). Disordered regions lie at residues 49-126 (TTLG…QQQH) and 165-184 (SIFG…PSQT). Composition is skewed to low complexity over residues 63 to 80 (QQQQ…QHQQ), 89 to 126 (QQHM…QQQH), and 165 to 182 (SIFG…ADPS). A CSD 1 domain is found at 186–250 (RETGIIEKLL…GKPIASQVSK (65 aa)). The CSD 2; degenerate domain maps to 261 to 337 (RVTGTVTTEL…GNLGACHIRL (77 aa)). In terms of domain architecture, CSD 3 spans 345-413 (KYRGVVCSMK…GREFACNITR (69 aa)). Positions 428–503 (VYKGQVLKSL…RDQLQRATSI (76 aa)) constitute a CSD 4; degenerate domain. In terms of domain architecture, CSD 5 spans 517-585 (REQGTIASLK…SRLQAIRIKH (69 aa)). One can recognise a CSD 6; degenerate domain in the interval 593–673 (FETLVASNIE…KECIAVNVQQ (81 aa)). Residues 721-741 (QNGYVMHGSPGGSTSSVGSNN) form a disordered region. A compositionally biased stretch (low complexity) spans 732–741 (GSTSSVGSNN). One can recognise a CSD 7 domain in the interval 763-831 (VYRGFIAVMK…NCLPAENVRM (69 aa)). The 74-residue stretch at 846 to 919 (THNGVVARPL…SGRAACVNAV (74 aa)) folds into the CSD 8; degenerate domain. Residues 922–987 (KKRATVDSIK…GKSSACNVLK (66 aa)) form the CSD 9 domain.

The protein belongs to the UNR family. As to quaternary structure, interacts with Sxl; cooperates with Sxl to prevent translation of msl-2 transcripts. Interacts with mle; promoting association between mle and roX2 non-coding RNA. Interacts (via CSD domain 7-9) with pAbp; promoting translation inhibition of msl-2 transcripts.

It is found in the cytoplasm. RNA-binding protein that acts as a regulator of dosage compensation in both males and females. In males, acts as positive regulator of dosage compensation by promoting assembly of the MSL complex, a multiprotein complex that mediates X-chromosome dosage compensation. Promotes MSL complex assembly via association with roX1 and roX2 non-coding RNA components of the MSL complex, facilitating the interaction between non-coding RNAs and mle. In females, acts as an inhibitor of dosage compensation together with Sxl by preventing production of msl-2 protein, an essential component of the MSL complex. Specifically binds to the 3'-UTR of msl-2 transcripts, and cooperates with Sxl to prevent translation initiation of msl-2 transcripts. Mechanistically, Sxl and Unr inhibit translation initiation by preventing ribosome recruitment after pAbp-mediated recruitment of the eIF4F complex. In Drosophila melanogaster (Fruit fly), this protein is RNA-binding protein Unr.